The following is a 213-amino-acid chain: Ribosomal RNA large subunit methyltransferase E (213 aa).

Residues G59, F61, D79, D97, and D121 each contribute to the S-adenosyl-L-methionine site. Catalysis depends on K161, which acts as the Proton acceptor.

The protein belongs to the class I-like SAM-binding methyltransferase superfamily. RNA methyltransferase RlmE family.

It localises to the cytoplasm. It carries out the reaction uridine(2552) in 23S rRNA + S-adenosyl-L-methionine = 2'-O-methyluridine(2552) in 23S rRNA + S-adenosyl-L-homocysteine + H(+). Its function is as follows. Specifically methylates the uridine in position 2552 of 23S rRNA at the 2'-O position of the ribose in the fully assembled 50S ribosomal subunit. The chain is Ribosomal RNA large subunit methyltransferase E from Myxococcus xanthus (strain DK1622).